We begin with the raw amino-acid sequence, 551 residues long: Adenylosuccinate synthetase (551 aa).

Residues glycine 131–lysine 137 and glycine 159–threonine 161 each bind GTP. Aspartate 132 functions as the Proton acceptor in the catalytic mechanism. Mg(2+)-binding residues include aspartate 132 and glycine 159. IMP-binding positions include aspartate 132–lysine 135, asparagine 157–histidine 160, threonine 248, arginine 262, asparagine 339, threonine 354, and arginine 418. The active-site Proton donor is the histidine 160. Residue threonine 414–arginine 420 participates in substrate binding. GTP is bound by residues arginine 420, lysine 446–aspartate 448, and glycine 528–glycine 530.

Belongs to the adenylosuccinate synthetase family. Homodimer. Requires Mg(2+) as cofactor.

It is found in the cytoplasm. It carries out the reaction IMP + L-aspartate + GTP = N(6)-(1,2-dicarboxyethyl)-AMP + GDP + phosphate + 2 H(+). It functions in the pathway purine metabolism; AMP biosynthesis via de novo pathway; AMP from IMP: step 1/2. In terms of biological role, plays an important role in the de novo pathway and in the salvage pathway of purine nucleotide biosynthesis. Catalyzes the first committed step in the biosynthesis of AMP from IMP. The protein is Adenylosuccinate synthetase of Phytophthora infestans (strain T30-4) (Potato late blight agent).